The sequence spans 1316 residues: DNA-directed RNA polymerase subunit beta' (1316 aa).

Zn(2+)-binding residues include Cys60, Cys62, Cys75, and Cys78. Asp535, Asp537, and Asp539 together coordinate Mg(2+). Zn(2+)-binding residues include Cys891, Cys968, Cys975, and Cys978.

The protein belongs to the RNA polymerase beta' chain family. As to quaternary structure, the RNAP catalytic core consists of 2 alpha, 1 beta, 1 beta' and 1 omega subunit. When a sigma factor is associated with the core the holoenzyme is formed, which can initiate transcription. The cofactor is Mg(2+). Zn(2+) serves as cofactor.

The enzyme catalyses RNA(n) + a ribonucleoside 5'-triphosphate = RNA(n+1) + diphosphate. In terms of biological role, DNA-dependent RNA polymerase catalyzes the transcription of DNA into RNA using the four ribonucleoside triphosphates as substrates. The polypeptide is DNA-directed RNA polymerase subunit beta' (Mycobacterium bovis (strain BCG / Tokyo 172 / ATCC 35737 / TMC 1019)).